The primary structure comprises 119 residues: Large ribosomal subunit protein uL14 (119 aa).

It belongs to the universal ribosomal protein uL14 family. As to quaternary structure, part of the 50S ribosomal subunit. Forms a cluster with proteins L3 and L19. In the 70S ribosome, L14 and L19 interact and together make contacts with the 16S rRNA in bridges B5 and B8.

In terms of biological role, binds to 23S rRNA. Forms part of two intersubunit bridges in the 70S ribosome. The polypeptide is Large ribosomal subunit protein uL14 (Anaplasma phagocytophilum (strain HZ)).